Here is a 417-residue protein sequence, read N- to C-terminus: 1-deoxy-D-xylulose 5-phosphate reductoisomerase (417 aa).

NADPH contacts are provided by threonine 10, glycine 11, serine 12, isoleucine 13, glycine 36, arginine 37, asparagine 38, and asparagine 130. Lysine 131 is a 1-deoxy-D-xylulose 5-phosphate binding site. Glutamate 132 provides a ligand contact to NADPH. Mn(2+) is bound at residue aspartate 156. Positions 157, 158, 194, and 217 each coordinate 1-deoxy-D-xylulose 5-phosphate. Glutamate 158 contributes to the Mn(2+) binding site. Glycine 223 serves as a coordination point for NADPH. Positions 230, 235, 236, and 239 each coordinate 1-deoxy-D-xylulose 5-phosphate. Residue glutamate 239 participates in Mn(2+) binding.

The protein belongs to the DXR family. Mg(2+) is required as a cofactor. Requires Mn(2+) as cofactor.

It carries out the reaction 2-C-methyl-D-erythritol 4-phosphate + NADP(+) = 1-deoxy-D-xylulose 5-phosphate + NADPH + H(+). It participates in isoprenoid biosynthesis; isopentenyl diphosphate biosynthesis via DXP pathway; isopentenyl diphosphate from 1-deoxy-D-xylulose 5-phosphate: step 1/6. In terms of biological role, catalyzes the NADPH-dependent rearrangement and reduction of 1-deoxy-D-xylulose-5-phosphate (DXP) to 2-C-methyl-D-erythritol 4-phosphate (MEP). The sequence is that of 1-deoxy-D-xylulose 5-phosphate reductoisomerase from Synechococcus sp. (strain CC9902).